A 356-amino-acid polypeptide reads, in one-letter code: DNA polymerase IV (356 aa).

One can recognise a UmuC domain in the interval 7 to 188 (IIHIDMDAFY…IPVTKFYGVG (182 aa)). Mg(2+) contacts are provided by Asp-11 and Asp-106. The active site involves Glu-107.

It belongs to the DNA polymerase type-Y family. In terms of assembly, monomer. Mg(2+) is required as a cofactor.

It localises to the cytoplasm. The catalysed reaction is DNA(n) + a 2'-deoxyribonucleoside 5'-triphosphate = DNA(n+1) + diphosphate. Its function is as follows. Poorly processive, error-prone DNA polymerase involved in untargeted mutagenesis. Copies undamaged DNA at stalled replication forks, which arise in vivo from mismatched or misaligned primer ends. These misaligned primers can be extended by PolIV. Exhibits no 3'-5' exonuclease (proofreading) activity. May be involved in translesional synthesis, in conjunction with the beta clamp from PolIII. This Listeria monocytogenes serotype 4a (strain HCC23) protein is DNA polymerase IV.